A 171-amino-acid chain; its full sequence is T-cell surface glycoprotein CD3 delta chain (171 aa).

An N-terminal signal peptide occupies residues 1–21 (MEHSTFLSGLVLATLLSQVSP). The Extracellular portion of the chain corresponds to 22-105 (FKIPVEELED…CVELDPATLA (84 aa)). Cysteine 37 and cysteine 73 are oxidised to a cystine. N-linked (GlcNAc...) asparagine glycosylation is found at asparagine 38, asparagine 54, and asparagine 74. A helical transmembrane segment spans residues 106–126 (GIIVTDVIATLLLALGVFCFA). The Cytoplasmic segment spans residues 127–171 (GHETGRLSGAADTQALLRNDQVYQPLRDRDDAQYSRLGGNWARNK). One can recognise an ITAM domain in the interval 138–166 (DTQALLRNDQVYQPLRDRDDAQYSRLGGN). Phosphotyrosine is present on residues tyrosine 149 and tyrosine 160.

The TCR-CD3 complex is composed of a CD3D/CD3E and a CD3G/CD3E heterodimers that preferentially associate with TCRalpha and TCRbeta, respectively, to form TCRalpha/CD3E/CD3G and TCRbeta/CD3G/CD3E trimers. In turn, the hexamer interacts with CD3Z homodimer to form the TCR-CD3 complex. Alternatively, TCRalpha and TCRbeta can be replaced by TCRgamma and TCRdelta. Interacts with coreceptors CD4 and CD8. Phosphorylated on Tyr residues after T-cell receptor triggering by LCK in association with CD4/CD8. As to expression, CD3D is mostly present on T-lymphocytes with its TCR-CD3 partners. Present also in fetal NK-cells.

The protein resides in the cell membrane. Its function is as follows. Part of the TCR-CD3 complex present on T-lymphocyte cell surface that plays an essential role in adaptive immune response. When antigen presenting cells (APCs) activate T-cell receptor (TCR), TCR-mediated signals are transmitted across the cell membrane by the CD3 chains CD3D, CD3E, CD3G and CD3Z. All CD3 chains contain immunoreceptor tyrosine-based activation motifs (ITAMs) in their cytoplasmic domain. Upon TCR engagement, these motifs become phosphorylated by Src family protein tyrosine kinases LCK and FYN, resulting in the activation of downstream signaling pathways. In addition of this role of signal transduction in T-cell activation, CD3D plays an essential role in thymocyte differentiation. Indeed, participates in correct intracellular TCR-CD3 complex assembly and surface expression. In absence of a functional TCR-CD3 complex, thymocytes are unable to differentiate properly. Interacts with CD4 and CD8 and thus serves to establish a functional link between the TCR and coreceptors CD4 and CD8, which is needed for activation and positive selection of CD4 or CD8 T-cells. The chain is T-cell surface glycoprotein CD3 delta chain (CD3D) from Macaca fascicularis (Crab-eating macaque).